Reading from the N-terminus, the 64-residue chain is Large ribosomal subunit protein bL35 (64 aa).

Residues 1–15 (MPKQKSHSGASKRFR) are compositionally biased toward basic residues. The disordered stretch occupies residues 1 to 22 (MPKQKSHSGASKRFRVTGSGKV).

Belongs to the bacterial ribosomal protein bL35 family.

The protein is Large ribosomal subunit protein bL35 of Frankia casuarinae (strain DSM 45818 / CECT 9043 / HFP020203 / CcI3).